Here is a 310-residue protein sequence, read N- to C-terminus: Probable endonuclease 4 (310 aa).

The interval Met1 to Val31 is disordered. Residues His94, His134, Glu173, Asp207, His210, His244, Asp257, His259, and Glu289 each coordinate Zn(2+).

This sequence belongs to the AP endonuclease 2 family. Zn(2+) serves as cofactor.

It carries out the reaction Endonucleolytic cleavage to 5'-phosphooligonucleotide end-products.. In terms of biological role, endonuclease IV plays a role in DNA repair. It cleaves phosphodiester bonds at apurinic or apyrimidinic (AP) sites, generating a 3'-hydroxyl group and a 5'-terminal sugar phosphate. The chain is Probable endonuclease 4 from Streptomyces avermitilis (strain ATCC 31267 / DSM 46492 / JCM 5070 / NBRC 14893 / NCIMB 12804 / NRRL 8165 / MA-4680).